The chain runs to 260 residues: Hydroxyethylthiazole kinase (260 aa).

Met36 is a binding site for substrate. ATP is bound by residues Arg112 and Thr157. Gly184 contacts substrate.

Belongs to the Thz kinase family. The cofactor is Mg(2+).

The catalysed reaction is 5-(2-hydroxyethyl)-4-methylthiazole + ATP = 4-methyl-5-(2-phosphooxyethyl)-thiazole + ADP + H(+). Its pathway is cofactor biosynthesis; thiamine diphosphate biosynthesis; 4-methyl-5-(2-phosphoethyl)-thiazole from 5-(2-hydroxyethyl)-4-methylthiazole: step 1/1. In terms of biological role, catalyzes the phosphorylation of the hydroxyl group of 4-methyl-5-beta-hydroxyethylthiazole (THZ). The chain is Hydroxyethylthiazole kinase from Shouchella clausii (strain KSM-K16) (Alkalihalobacillus clausii).